The following is a 139-amino-acid chain: Protein COLD-REGULATED 15A, chloroplastic (139 aa).

The N-terminal 40 residues, 1–40 (MAMSFSGAVLTGMASSFHSGAKQSSFGAVRVGQKTQFVVV), are a transit peptide targeting the chloroplast.

The protein belongs to the COR15 protein family. In terms of assembly, forms homooligomers which interact with potential stromal substrates in the stroma of chloroplasts. Interacts with the galactose headgroup of the chloroplast lipid monogalactosyldiacylglycerol (MGDG).

The protein resides in the plastid. Its subcellular location is the chloroplast stroma. Exhibits cryoprotective activity toward stromal substrates (e.g. LDH and rubisco) in chloroplasts and in protoplasts and confers freezing tolerance to plants in a CBF-dependent manner. Protectant against various stresses (e.g. cold, drought and heat stress) by preventing protein aggregation (e.g. LDH) and attenuating enzyme inactivation. Influences the intrinsic curvature of the inner membrane of the chloroplast envelope, and modulates the freeze-induced lamellar-to-hexagonal II phase transitions that occur in regions where the plasma membrane is brought into close apposition with the chloroplast envelope during freeze-induced osmotic contraction. Mediates a shift in the melting curves of phospholipids-containing membranes to lower temperatures. Involved in the regulation of leaf senescence by abscisic acid (ABA) in a VNI2-dependent manner. This is Protein COLD-REGULATED 15A, chloroplastic from Arabidopsis thaliana (Mouse-ear cress).